Consider the following 341-residue polypeptide: Geranylgeranyl pyrophosphate synthase penG (341 aa).

Isopentenyl diphosphate-binding residues include lysine 68, arginine 71, and histidine 100. Mg(2+) is bound by residues aspartate 107 and aspartate 111. Residue arginine 116 coordinates dimethylallyl diphosphate. Arginine 117 is an isopentenyl diphosphate binding site. Dimethylallyl diphosphate-binding residues include lysine 194, threonine 195, and glutamine 228. A Mg(2+)-binding site is contributed by aspartate 231. 3 residues coordinate dimethylallyl diphosphate: asparagine 235, lysine 245, and lysine 255.

Belongs to the FPP/GGPP synthase family. Mg(2+) serves as cofactor.

It catalyses the reaction isopentenyl diphosphate + dimethylallyl diphosphate = (2E)-geranyl diphosphate + diphosphate. It carries out the reaction isopentenyl diphosphate + (2E)-geranyl diphosphate = (2E,6E)-farnesyl diphosphate + diphosphate. The enzyme catalyses isopentenyl diphosphate + (2E,6E)-farnesyl diphosphate = (2E,6E,10E)-geranylgeranyl diphosphate + diphosphate. Its pathway is secondary metabolite biosynthesis. Functionally, geranylgeranyl pyrophosphate synthase; part of the gene cluster that mediates the biosynthesis of the indole diterpenes penitrems. The geranylgeranyl diphosphate (GGPP) synthase penG catalyzes the first step in penitrem biosynthesis via conversion of farnesyl pyrophosphate and isopentyl pyrophosphate into geranylgeranyl pyrophosphate (GGPP). Condensation of indole-3-glycerol phosphate with GGPP by the prenyl transferase penC then forms 3-geranylgeranylindole (3-GGI). Epoxidation by the FAD-dependent monooxygenase penM leads to a epoxidized-GGI that is substrate of the terpene cyclase penB for cyclization to yield paspaline. Paspaline is subsequently converted to 13-desoxypaxilline by the cytochrome P450 monooxygenase penP, the latter being then converted to paxilline by the cytochrome P450 monooxygenase penQ. Paxilline is converted to beta-paxitriol via C-10 ketoreduction by the short-chain dehydrogenase PC-15 which can be monoprenylated at the C-20 by the indole diterpene prenyltransferase penD. A two-step elimination (acetylation and elimination) process performed by the O-acetyltransferase PC-16 and the P.simplicissimum ptmI-ortholog not yet identified in P.crustosum, leads to the production of the prenylated form of penijanthine. The FAD-linked oxidoreductase ptmO then converts the prenylated form of penijanthine into PC-M5 which is in turn transformed into PC-M4 by the aromatic dimethylallyltransferase PC-22. A series of oxidation steps involving 4 cytochrome P450 monooxygenases (PC-21, PC-05, PC-23, PC-20) and a FAD-dependent monooxygenase (PC-14) are required for the transformation of PC-M4 to penitrems A and E. Synthesis of these final products is proposed to proceed via penitrems D and C (PC-21, PC-05, PC-14) and penitrems B and F (PC-21, PC-05, PC-14, PC-23). This chain is Geranylgeranyl pyrophosphate synthase penG, found in Penicillium crustosum (Blue mold fungus).